We begin with the raw amino-acid sequence, 398 residues long: 8-amino-7-oxononanoate synthase (398 aa).

Substrate is bound at residue Arg23. Gly110–Tyr111 is a pyridoxal 5'-phosphate binding site. His135 lines the substrate pocket. Residues Ser181, His209, and Thr237 each contribute to the pyridoxal 5'-phosphate site. Position 240 is an N6-(pyridoxal phosphate)lysine (Lys240). Thr354 lines the substrate pocket.

Belongs to the class-II pyridoxal-phosphate-dependent aminotransferase family. BioF subfamily. As to quaternary structure, homodimer. The cofactor is pyridoxal 5'-phosphate.

The catalysed reaction is 6-carboxyhexanoyl-[ACP] + L-alanine + H(+) = (8S)-8-amino-7-oxononanoate + holo-[ACP] + CO2. The protein operates within cofactor biosynthesis; biotin biosynthesis. Its function is as follows. Catalyzes the decarboxylative condensation of pimeloyl-[acyl-carrier protein] and L-alanine to produce 8-amino-7-oxononanoate (AON), [acyl-carrier protein], and carbon dioxide. The chain is 8-amino-7-oxononanoate synthase from Anaeromyxobacter sp. (strain K).